The following is a 435-amino-acid chain: Ras association domain-containing protein 9 (435 aa).

The segment at 1–22 (MAPFGRNLLKTRHKNRSPTKDM) is disordered. Positions 25–119 (EEKEIVVWVC…MQFVLVKTDA (95 aa)) constitute a Ras-associating domain. The stretch at 195-291 (HTIHQQVQRM…KLSAEIEREV (97 aa)) forms a coiled coil. The segment at 371 to 423 (SKDGCQGKENRGKEAEASSSNGEIPPLTQRVFNTYTNDTDSDTGISSNHSQDS) is disordered. A compositionally biased stretch (basic and acidic residues) spans 375-386 (CQGKENRGKEAE). Positions 400–423 (RVFNTYTNDTDSDTGISSNHSQDS) are enriched in polar residues.

In terms of assembly, interacts with PAM. In terms of tissue distribution, testis, kidney, skeletal muscle, liver, lung, brain, heart, pituitary gland, adrenal gland and ovary.

It localises to the endosome. Functionally, may play a role in regulating vesicuar trafficking in cells. The protein is Ras association domain-containing protein 9 (Rassf9) of Rattus norvegicus (Rat).